The chain runs to 127 residues: Glycine cleavage system H protein (127 aa).

The region spanning 24-106 is the Lipoyl-binding domain; the sequence is TATIGITDYA…YAEGWMLKLK (83 aa). K65 carries the post-translational modification N6-lipoyllysine.

This sequence belongs to the GcvH family. The glycine cleavage system is composed of four proteins: P, T, L and H. (R)-lipoate is required as a cofactor.

In terms of biological role, the glycine cleavage system catalyzes the degradation of glycine. The H protein shuttles the methylamine group of glycine from the P protein to the T protein. The protein is Glycine cleavage system H protein of Opitutus terrae (strain DSM 11246 / JCM 15787 / PB90-1).